An 859-amino-acid chain; its full sequence is Protein O-mannosyl-transferase Tmtc1 (859 aa).

Topologically, residues 1 to 22 (MHTPKCRRPSMSATLSHKDLAG) are cytoplasmic. The helical transmembrane segment at 23–43 (LAGCSALAFVLYLNTLNAGFV) threads the bilayer. Residues 44–103 (YDDRRAILANGDVTGARPLANLLRNDFWGTPLVDSGSHGSWRPLCVLSFRLNYLAGGMTP) lie on the Extracellular side of the membrane. The helical transmembrane segment at 104-124 (LGYHLVNVMLHCVATWLVFLV) threads the bilayer. The Cytoplasmic segment spans residues 125 to 134 (ARTLLPSRMG). 2 helical membrane passes run 135-154 (VLAA…AVAG) and 155-174 (LVGR…YLSY). Over 175-189 (RRHMLNREWGSLILT) the chain is Cytoplasmic. A helical transmembrane segment spans residues 190–210 (IMLALAALLCKETAITALLLC). Over 211-245 (GLCDVLSPVGRENSDKVCDGSISGLASFNFQRRFR) the chain is Extracellular. A helical membrane pass occupies residues 246-266 (SLSILGFTLLCGLYCRLSLLP). At 267–288 (RPSTAFSAADNPTAHESCFWTR) the chain is on the cytoplasmic side. The chain crosses the membrane as a helical span at residues 289–309 (TLTFLYLPVANFGILLWPQEL). Topologically, residues 310 to 328 (SFDWGMEAVSRIRTLWDAR) are extracellular. A helical membrane pass occupies residues 329–349 (NILTAGFYGSLVAILWKGSGL). Topologically, residues 350–422 (RSAASPMDFA…SWTAAPILGT (73 aa)) are cytoplasmic. Residues 423–443 (AFLVLPFLPASNLLFYVGFVM) form a helical membrane-spanning segment. At 444–446 (AER) the chain is on the extracellular side. A helical transmembrane segment spans residues 447-467 (VLYLPSVGYCLLFGLGFGHLW). At 468 to 473 (QRVNSS) the chain is on the cytoplasmic side. Residues 474–493 (WRSRLMLLCGLALLLGVHGV) form a helical membrane-spanning segment. Topologically, residues 494 to 859 (RTFRRNLDWR…RMNVHKHENE (366 aa)) are extracellular. TPR repeat units lie at residues 518 to 551 (PKAL…RPTM), 552 to 585 (ADAH…RPQL), 586 to 620 (AVAY…EGSG), 632 to 665 (YTCY…LPLL), 671 to 704 (AVLH…QPEQ), 705 to 739 (GAAY…APLE), 740 to 773 (PSSH…APQD), 774 to 807 (YTLQ…QPMA), and 808 to 841 (AHAH…QPGH). N-linked (GlcNAc...) asparagine glycosylation occurs at asparagine 567. Asparagine 718 carries N-linked (GlcNAc...) asparagine glycosylation.

This sequence belongs to the TMTC family.

It localises to the membrane. The protein resides in the endoplasmic reticulum. The enzyme catalyses a di-trans,poly-cis-dolichyl beta-D-mannosyl phosphate + L-seryl-[protein] = 3-O-(alpha-D-mannosyl)-L-seryl-[protein] + a di-trans,poly-cis-dolichyl phosphate + H(+). It carries out the reaction a di-trans,poly-cis-dolichyl beta-D-mannosyl phosphate + L-threonyl-[protein] = 3-O-(alpha-D-mannosyl)-L-threonyl-[protein] + a di-trans,poly-cis-dolichyl phosphate + H(+). Its pathway is protein modification; protein glycosylation. Its function is as follows. Transfers mannosyl residues to the hydroxyl group of serine or threonine residues. This chain is Protein O-mannosyl-transferase Tmtc1, found in Drosophila melanogaster (Fruit fly).